A 510-amino-acid polypeptide reads, in one-letter code: MWKQILSKLPNKKSSKHEHRGREHGGHSSSSSHTSGASTSKSTDNGAAKSHAKNASPAGKSAASDSGFKDGNLKSSGNNNNNNNNGVFTPYEALPSFKDVPNTEKQNLFIKKLNLCRVVFDFTDPTKNIKEKDIKRQTLLELVDYVNSPNGKFSEVGIQEVVRMVSANIFRTLNPQPRENKVIDALDLEEEEPSMDLAWPHLQLVYELFLRFVASPETDTKLAKRYIDQSFVLRLLDLFDSEDPRERDCLKTILHRIYGKFMVHRPFIRKSINNIFYRFVFETEKHNGIAEFLEILGSIINGFALPLKDEHKVFLVRVLIPLHKPKCLQMYHQQLSYCITQFVEKDCKLADTVIRGLLKYWPVTNSSKEVMFLNELEEVLEATQPPEFQRCMVPLFRQIARCLNSLHFQVAERALFLWNNNHIENLIMQNRKVILPIIFPALERNAQKHWNQAVHSLTLNVRKIFHDLDPELFKECLAKFKEDESKAAETEAKREATWKRLEELGVRKAS.

The segment at 1–87 (MWKQILSKLP…NNNNNNNNGV (87 aa)) is disordered. Over residues 10–19 (PNKKSSKHEH) the composition is skewed to basic residues. The segment covering 27–42 (HSSSSSHTSGASTSKS) has biased composition (low complexity).

Belongs to the phosphatase 2A regulatory subunit B56 family. In terms of assembly, PP2A consists of a common heteromeric enzyme, composed of a catalytic subunit (subunits C), a constant regulatory subunit (subunit A), and a variety of regulatory subunits such as subunits B (the R2/B/PR55/B55, R3/B''/PR72/PR130/PR59 and R5/B'/B56 families). Interacts with BZR1. Interacts with BRI1.

It is found in the nucleus. The protein localises to the nucleolus. The protein resides in the cytoplasm. Functionally, the B regulatory subunit may modulate substrate selectivity and catalytic activity, and may also direct the localization of the catalytic enzyme to a particular subcellular compartment. The holoenzyme composed of PP2AA1, PP2A4 and B'ETA acts as negative regulator of plant innate immunity by controlling BAK1 phosphorylation state and activation in surface-localized immune receptor complexes. Required for the formation of the PP2A holoenzyme that negatively regulates brassinosteroid signaling by dephosphorylating and inactivating BRI1 in the cytoplasm. This Arabidopsis thaliana (Mouse-ear cress) protein is Serine/threonine protein phosphatase 2A 59 kDa regulatory subunit B' eta isoform (B'ETA).